Consider the following 367-residue polypeptide: Alanine racemase (367 aa).

The active-site Proton acceptor; specific for D-alanine is Lys40. Lys40 carries the N6-(pyridoxal phosphate)lysine modification. Arg136 is a substrate binding site. Tyr263 (proton acceptor; specific for L-alanine) is an active-site residue. Met310 contributes to the substrate binding site.

The protein belongs to the alanine racemase family. Requires pyridoxal 5'-phosphate as cofactor.

The enzyme catalyses L-alanine = D-alanine. Its pathway is amino-acid biosynthesis; D-alanine biosynthesis; D-alanine from L-alanine: step 1/1. Its function is as follows. Catalyzes the interconversion of L-alanine and D-alanine. May also act on other amino acids. The chain is Alanine racemase (alr) from Streptococcus thermophilus (strain ATCC BAA-491 / LMD-9).